Here is a 36-residue protein sequence, read N- to C-terminus: Photosystem I reaction center subunit VIII (36 aa).

Residues 7–29 form a helical membrane-spanning segment; sequence PSILVPLVGILLPAVTMASLFLY.

Belongs to the PsaI family.

The protein localises to the plastid. Its subcellular location is the chloroplast thylakoid membrane. May help in the organization of the PsaL subunit. The polypeptide is Photosystem I reaction center subunit VIII (Adiantum capillus-veneris (Maidenhair fern)).